The following is a 749-amino-acid chain: MQSLLDGHHHQLPSLLQQHHNGHHLLDQHQQHQHQLPPQATTTSESDGRAPRDELEMSKSGGSDNLESGGGGGGGGSGGDQDPNQRPRKKRYHRHTQHQIQELEAFFKECPHPDDKQRKELSRELGLEPLQVKFWFQNKRTQMKTQHERHENNALRAENEKLRAENMRYKEALANASCPNCGGPAAIGEMSFDEHHLRLENARLRDEIDRISAIAAKYVGKPAAAVSAAYPPLPPSNRSPLDHMGIPGAGADVFGADFDKPLVIELAVAAMEELVRMAQLGEPLWAPALGGEALGEEEYARTFPRGLGPKSPELRSEASRETAVVIMNHVSLVEMLMDVGQWTALFSSIVSRAATLEVLSTGVAGNHNGALQLMSAEFQMPSPLVPTRETQFLRYCKQHPDGTWAVVDVSLDGLRAGAGGGCQPAAARGHRRRPSGCLIQEMPNGYSKVTWVEHVEADDQMVHNLYKPVVNSGMAFGARRWVATLERQCERLASAMASNVASSGDAGVITTSEGRRSMLKLAERMVASFCGGVTASTTHQWTTLSGSGAEDVRVMTRKSVDDPGRPPGIILNAATSFWLPVPPSRVFDFLRDDSTRSEWDILSNGGVVQEMAHIANGRDHGNAVSLLRVNNANSNQSNMLILQECCTDATGSYVIYAPVDVVAMNVVLNGGDPDYVALLPSGFAILPDGPDGGGGSLLTVAFQILVDSVPTAKLSLGSVATVNSLIACTVERIKAAITGDNGVAPPCPR.

Residues leucine 26 to histidine 98 form a disordered region. A compositionally biased stretch (basic and acidic residues) spans serine 46–methionine 57. Gly residues predominate over residues serine 68–glycine 79. A compositionally biased stretch (basic residues) spans arginine 86–glutamine 97. Positions arginine 88–histidine 147 form a DNA-binding region, homeobox. Residues glutamine 137–tyrosine 218 adopt a coiled-coil conformation. The region spanning alanine 256–serine 494 is the START domain.

The protein belongs to the HD-ZIP homeobox family. Class IV subfamily.

Its subcellular location is the nucleus. Functionally, probable transcription factor. This chain is Homeobox-leucine zipper protein ROC7 (ROC7), found in Oryza sativa subsp. japonica (Rice).